The primary structure comprises 122 residues: Ribosome-binding factor A (122 aa).

This sequence belongs to the RbfA family. In terms of assembly, monomer. Binds 30S ribosomal subunits, but not 50S ribosomal subunits or 70S ribosomes.

Its subcellular location is the cytoplasm. Functionally, one of several proteins that assist in the late maturation steps of the functional core of the 30S ribosomal subunit. Associates with free 30S ribosomal subunits (but not with 30S subunits that are part of 70S ribosomes or polysomes). Required for efficient processing of 16S rRNA. May interact with the 5'-terminal helix region of 16S rRNA. The chain is Ribosome-binding factor A from Burkholderia mallei (strain NCTC 10229).